A 674-amino-acid polypeptide reads, in one-letter code: ATP-dependent DNA helicase Hel308 (674 aa).

ATP is bound by residues Gln27 and 44–51 (VPTAAGKT). In terms of domain architecture, Helicase ATP-binding spans 31-197 (IEQFRKGKNI…WLNASLIKSS (167 aa)). Residues 142–145 (DEIH) carry the DEAH box motif. Residues 224-411 (DINLLVKETV…PEKVRFNTLA (188 aa)) enclose the Helicase C-terminal domain.

This sequence belongs to the helicase family. Hel308 subfamily. Monomer.

The enzyme catalyses Couples ATP hydrolysis with the unwinding of duplex DNA by translocating in the 3'-5' direction.. It carries out the reaction ATP + H2O = ADP + phosphate + H(+). DNA-dependent ATPase and 3'-5' DNA helicase that may be involved in repair of stalled replication forks. The chain is ATP-dependent DNA helicase Hel308 from Thermoplasma volcanium (strain ATCC 51530 / DSM 4299 / JCM 9571 / NBRC 15438 / GSS1).